The sequence spans 431 residues: Tryptophan synthase beta chain 2 (431 aa).

Position 111 is an N6-(pyridoxal phosphate)lysine (Lys111).

The protein belongs to the TrpB family. In terms of assembly, tetramer of two alpha and two beta chains. Pyridoxal 5'-phosphate serves as cofactor.

It carries out the reaction (1S,2R)-1-C-(indol-3-yl)glycerol 3-phosphate + L-serine = D-glyceraldehyde 3-phosphate + L-tryptophan + H2O. The protein operates within amino-acid biosynthesis; L-tryptophan biosynthesis; L-tryptophan from chorismate: step 5/5. The beta subunit is responsible for the synthesis of L-tryptophan from indole and L-serine. The polypeptide is Tryptophan synthase beta chain 2 (trpB2) (Sulfurisphaera tokodaii (strain DSM 16993 / JCM 10545 / NBRC 100140 / 7) (Sulfolobus tokodaii)).